A 191-amino-acid polypeptide reads, in one-letter code: MAYSTREILLALCIRDSRVHGNGTLHPVLELAARETPLRLSPEDTVVLRYHVLLEEIIERNSETFTETWNRFITHTEHVDLDFNSVFVEIFHRGDPSLGRALAWMAWCMHACRTLCCNQSTPYYVVDLSVRGMLEASEGLDGWIHQQGGWSTLIEDNIPGSRRFSWTLFLAGLTLSLLVICSYLFISRGRH.

The interaction with host VRK2 stretch occupies residues 1–18; that stretch reads MAYSTREILLALCIRDSR. Residue Asn-22 is glycosylated (N-linked (GlcNAc...) asparagine; by host). Residues 89-109 carry the BH1 motif; the sequence is EIFHRGDPSLGRALAWMAWCM. The interaction with host VRK2 stretch occupies residues 89–142; sequence EIFHRGDPSLGRALAWMAWCMHACRTLCCNQSTPYYVVDLSVRGMLEASEGLDG. Asn-118 is a glycosylation site (N-linked (GlcNAc...) asparagine; by host). The short motif at 142 to 157 is the BH2 element; the sequence is GWIHQQGGWSTLIEDN. Residues 166-186 form a helical membrane-spanning segment; it reads WTLFLAGLTLSLLVICSYLFI.

The protein belongs to the Bcl-2 family. In terms of assembly, interacts with isoform 1 of host VRK2; this interaction is involved in protecting cells from apoptosis. Interacts with host PRA1; this interaction seems to modulate BHRF1 anti-apoptotic activity. Interacts with host BCL2L11. Interacts with host BAD and BBC3. Interacts with BALF1; BALF1 acting as a negative regulator of the survival function of BHRF1. Interacts with host BECN1.

Its subcellular location is the host membrane. It is found in the host mitochondrion. Functionally, prevents premature death of the host cell during virus production, which would otherwise reduce the amount of progeny virus. Acts as a host B-cell leukemia/lymphoma 2 (Bcl-2) homolog, and interacts with pro-apoptotic proteins to prevent mitochondria permeabilization, release of cytochrome c and subsequent apoptosis of the host cell. In addition, plays a role in the inhibiton of host BECN1-mediated starvation-induced autophagy without affecting basal levels of autophagy. The protein is Apoptosis regulator BHRF1 of Epstein-Barr virus (strain GD1) (HHV-4).